The sequence spans 396 residues: Tryptophan synthase beta chain (396 aa).

An N6-(pyridoxal phosphate)lysine modification is found at Lys86.

This sequence belongs to the TrpB family. Tetramer of two alpha and two beta chains. Pyridoxal 5'-phosphate is required as a cofactor.

The enzyme catalyses (1S,2R)-1-C-(indol-3-yl)glycerol 3-phosphate + L-serine = D-glyceraldehyde 3-phosphate + L-tryptophan + H2O. It participates in amino-acid biosynthesis; L-tryptophan biosynthesis; L-tryptophan from chorismate: step 5/5. The beta subunit is responsible for the synthesis of L-tryptophan from indole and L-serine. In Vibrio vulnificus (strain CMCP6), this protein is Tryptophan synthase beta chain.